Reading from the N-terminus, the 427-residue chain is Adenylosuccinate synthetase (427 aa).

GTP contacts are provided by residues 12–18 and 40–42; these read GDEGKGK and GHT. The Proton acceptor role is filled by D13. Mg(2+) contacts are provided by D13 and G40. Residues 13–16, 38–41, T128, R142, Q223, T238, and R302 contribute to the IMP site; these read DEGK and NAGH. H41 serves as the catalytic Proton donor. 298-304 is a substrate binding site; that stretch reads TTTGRAR. GTP contacts are provided by residues R304, 330 to 332, and 412 to 414; these read KLD and AVG.

This sequence belongs to the adenylosuccinate synthetase family. Homodimer. It depends on Mg(2+) as a cofactor.

Its subcellular location is the cytoplasm. It catalyses the reaction IMP + L-aspartate + GTP = N(6)-(1,2-dicarboxyethyl)-AMP + GDP + phosphate + 2 H(+). The protein operates within purine metabolism; AMP biosynthesis via de novo pathway; AMP from IMP: step 1/2. Functionally, plays an important role in the de novo pathway of purine nucleotide biosynthesis. Catalyzes the first committed step in the biosynthesis of AMP from IMP. This Desulfitobacterium hafniense (strain DSM 10664 / DCB-2) protein is Adenylosuccinate synthetase.